Consider the following 248-residue polypeptide: Adenosylcobinamide-GDP ribazoletransferase (248 aa).

The next 6 helical transmembrane spans lie at 28 to 48 (LFWFPVVGLFLGLLQAGAGYL), 103 to 123 (VGSFGAIGLILLFLFKSIVLV), 126 to 146 (LAFGLYPWIVSGVLLARLVQV), 169 to 189 (AGIQHFVAAFLVALFILLLLM), 193 to 213 (MLPSGIGLSAAIAGAVLMSLL), and 225 to 245 (VLGASSEFTEVLVWVSGVFLA).

It belongs to the CobS family. Mg(2+) is required as a cofactor.

The protein resides in the cell inner membrane. It carries out the reaction alpha-ribazole + adenosylcob(III)inamide-GDP = adenosylcob(III)alamin + GMP + H(+). The enzyme catalyses alpha-ribazole 5'-phosphate + adenosylcob(III)inamide-GDP = adenosylcob(III)alamin 5'-phosphate + GMP + H(+). It functions in the pathway cofactor biosynthesis; adenosylcobalamin biosynthesis; adenosylcobalamin from cob(II)yrinate a,c-diamide: step 7/7. Its function is as follows. Joins adenosylcobinamide-GDP and alpha-ribazole to generate adenosylcobalamin (Ado-cobalamin). Also synthesizes adenosylcobalamin 5'-phosphate from adenosylcobinamide-GDP and alpha-ribazole 5'-phosphate. The protein is Adenosylcobinamide-GDP ribazoletransferase of Chlorobium phaeobacteroides (strain BS1).